The primary structure comprises 933 residues: Progesterone receptor (933 aa).

The interval Met-1–Leu-164 is AF3; mediates transcriptional activation. Positions Met-1–Val-256 are disordered. The modulating, Pro-Rich stretch occupies residues Met-1–Ile-566. Ser-20 is modified (phosphoserine). 2 consecutive short sequence motifs (LXXL motif) follow at residues Leu-55 to Leu-59 and Leu-115 to Leu-119. Phosphoserine is present on residues Ser-130 and Ser-162. The mediates transcriptional transrepression stretch occupies residues Met-165–His-305. Residues Lys-183–Arg-187 carry the Nuclear localization signal motif. Phosphoserine occurs at positions 190 and 213. The segment covering Glu-220 to Asp-231 has biased composition (acidic residues). Ser-294 bears the Phosphoserine; by MAPK1 mark. Positions Gly-332 to Phe-380 are disordered. Positions Ala-335 to Ser-350 are enriched in low complexity. Position 345 is a phosphoserine; by MAPK (Ser-345). A Glycyl lysine isopeptide (Lys-Gly) (interchain with G-Cter in SUMO); alternate cross-link involves residue Lys-388. A Glycyl lysine isopeptide (Lys-Gly) (interchain with G-Cter in ubiquitin); alternate cross-link involves residue Lys-388. At Ser-400 the chain carries Phosphoserine; by CDK2. The disordered stretch occupies residues Pro-415–Ser-454. A compositionally biased stretch (pro residues) spans Pro-418–Arg-433. Residues Pro-434–Ser-454 show a composition bias toward low complexity. The tract at residues Ser-456 to Arg-546 is AF1; mediates transcriptional activation. Lys-531 is covalently cross-linked (Glycyl lysine isopeptide (Lys-Gly) (interchain with G-Cter in SUMO)). NR C4-type zinc fingers lie at residues Cys-567–Cys-587 and Cys-603–Cys-627. The segment at residues Cys-567–Phe-639 is a DNA-binding region (nuclear receptor). Ser-676 is modified (phosphoserine). Positions Gln-679–Ile-913 constitute an NR LBD domain. The interval Leu-687–Lys-933 is AF2; mediates transcriptional activation. Arg-766 is a progesterone binding site.

Belongs to the nuclear hormone receptor family. In terms of assembly, interacts with SMARD1 and UNC45A. Interacts with CUEDC2; the interaction promotes ubiquitination, decreases sumoylation, and represses transcriptional activity. Interacts with PIAS3; the interaction promotes sumoylation of PR in a hormone-dependent manner, inhibits DNA-binding, and alters nuclear export. Interacts with SP1; the interaction requires ligand-induced phosphorylation on Ser-345 by ERK1/2-MAPK. Interacts with PRMT2. Interacts with NCOA2 and NCOA1. Interacts with KLF9. Interacts with GTF2B. Phosphorylated on multiple serine sites. Several of these sites are hormone-dependent. Phosphorylation on Ser-294 is highly hormone-dependent and modulates ubiquitination and sumoylation on Lys-388. Phosphorylation on Ser-345 also requires induction by hormone. Basal phosphorylation on Ser-162, Ser-190 and Ser-400 is increased in response to progesterone and can be phosphorylated in vitro by the CDK2-A1 complex. Increased levels of phosphorylation on Ser-400 also in the presence of EGF, heregulin, IGF, PMA and FBS. Phosphorylation at this site by CDK2 is ligand-independent, and increases nuclear translocation and transcriptional activity. Phosphorylation at Ser-162 and Ser-294, but not at Ser-190, is impaired during the G(2)/M phase of the cell cycle. Phosphorylation on Ser-345 by ERK1/2 MAPK is required for interaction with SP1. Post-translationally, sumoylation is hormone-dependent and represses transcriptional activity. Sumoylation on all three sites is enhanced by PIAS3. Desumoylated by SENP1. Sumoylation on Lys-388, the main site of sumoylation, is repressed by ubiquitination on the same site, and modulated by phosphorylation at Ser-294. In terms of processing, ubiquitination is hormone-dependent and represses sumoylation on the same site. Promoted by MAPK-mediated phosphorylation on Ser-294. Ubiquitinated by UBR5, leading to its degradation: UBR5 specifically recognizes and binds ligand-bound PGR when it is not associated with coactivators (NCOAs). In presence of NCOAs, the UBR5-degron is not accessible, preventing its ubiquitination and degradation. Palmitoylated by ZDHHC7 and ZDHHC21. Palmitoylation is required for plasma membrane targeting and for rapid intracellular signaling via ERK and AKT kinases and cAMP generation.

It localises to the nucleus. It is found in the cytoplasm. Functionally, the steroid hormones and their receptors are involved in the regulation of eukaryotic gene expression and affect cellular proliferation and differentiation in target tissues. Transcriptional activator of several progesteron-dependent promoters in a variety of cell types. Involved in activation of SRC-dependent MAPK signaling on hormone stimulation. The protein is Progesterone receptor (PGR) of Chlorocebus aethiops (Green monkey).